Reading from the N-terminus, the 101-residue chain is Small ribosomal subunit protein bS6 (101 aa).

Belongs to the bacterial ribosomal protein bS6 family.

In terms of biological role, binds together with bS18 to 16S ribosomal RNA. The protein is Small ribosomal subunit protein bS6 of Paenarthrobacter aurescens (strain TC1).